We begin with the raw amino-acid sequence, 510 residues long: Cytochrome P450 monooxygenase penQ (510 aa).

Residues 9–26 (WIVTLIVAATTYCTLRWV) form a helical membrane-spanning segment. N-linked (GlcNAc...) asparagine glycosylation is found at N148 and N341. C448 is a binding site for heme. The N-linked (GlcNAc...) asparagine glycan is linked to N482.

It belongs to the cytochrome P450 family. Heme serves as cofactor.

Its subcellular location is the membrane. Its pathway is secondary metabolite biosynthesis. Functionally, cytochrome P450 monooxygenase; part of the gene cluster that mediates the biosynthesis of the indole diterpenes penitrems. The geranylgeranyl diphosphate (GGPP) synthase penG catalyzes the first step in penitrem biosynthesis via conversion of farnesyl pyrophosphate and isopentyl pyrophosphate into geranylgeranyl pyrophosphate (GGPP). Condensation of indole-3-glycerol phosphate with GGPP by the prenyl transferase penC then forms 3-geranylgeranylindole (3-GGI). Epoxidation by the FAD-dependent monooxygenase penM leads to a epoxidized-GGI that is substrate of the terpene cyclase penB for cyclization to yield paspaline. Paspaline is subsequently converted to 13-desoxypaxilline by the cytochrome P450 monooxygenase penP, the latter being then converted to paxilline by the cytochrome P450 monooxygenase penQ. Paxilline is converted to beta-paxitriol via C-10 ketoreduction by the short-chain dehydrogenase PC-15 which can be monoprenylated at the C-20 by the indole diterpene prenyltransferase penD. A two-step elimination (acetylation and elimination) process performed by the O-acetyltransferase PC-16 and the P.simplicissimum ptmI-ortholog not yet identified in P.crustosum, leads to the production of the prenylated form of penijanthine. The FAD-linked oxidoreductase ptmO then converts the prenylated form of penijanthine into PC-M5 which is in turn transformed into PC-M4 by the aromatic dimethylallyltransferase PC-22. A series of oxidation steps involving 4 cytochrome P450 monooxygenases (PC-21, PC-05, PC-23, PC-20) and a FAD-dependent monooxygenase (PC-14) are required for the transformation of PC-M4 to penitrems A and E. Synthesis of these final products is proposed to proceed via penitrems D and C (PC-21, PC-05, PC-14) and penitrems B and F (PC-21, PC-05, PC-14, PC-23). The protein is Cytochrome P450 monooxygenase penQ of Penicillium crustosum (Blue mold fungus).